A 260-amino-acid polypeptide reads, in one-letter code: 3'-5' ssDNA/RNA exonuclease TatD (260 aa).

A divalent metal cation-binding residues include Glu-91, His-127, and His-152.

It belongs to the metallo-dependent hydrolases superfamily. TatD-type hydrolase family. TatD subfamily. As to quaternary structure, monomer. Mg(2+) serves as cofactor.

It is found in the cytoplasm. Its function is as follows. 3'-5' exonuclease that prefers single-stranded DNA and RNA. May play a role in the H(2)O(2)-induced DNA damage repair. In Citrobacter koseri (strain ATCC BAA-895 / CDC 4225-83 / SGSC4696), this protein is 3'-5' ssDNA/RNA exonuclease TatD.